We begin with the raw amino-acid sequence, 83 residues long: Defensin-1 (83 aa).

Residues 1–33 form the signal peptide; the sequence is MAGKGVGSRLSTLFLLVLLVITIGMMQVQVAEG. Intrachain disulfides connect Cys36-Cys82, Cys47-Cys67, Cys53-Cys76, and Cys57-Cys78.

The protein belongs to the DEFL family.

The protein resides in the secreted. Functionally, plant defense peptide. Has antifungal activity against B.cinera, F.oxysporum, F.solani and H.annosum with IC(50) values of 0.4 ug/ml, 2.9 ug/ml, 0.9 ug/ml and 1.4 ug/ml, respectively. Has modest antifungal activity against C.albicans and T.reesei. Causes thickening of F.oxysporum hyphae and an increase in their branching. Lacks antibacterial activity against the Gram-negative bacteria E.coli and E.carotovora. In Pinus sylvestris (Scotch pine), this protein is Defensin-1.